The following is a 302-amino-acid chain: NmrA-like family domain-containing protein DDB_G0286605 (302 aa).

NADP(+) is bound by residues 9 to 14 (GGTGYQ), 35 to 39 (RNPES), 56 to 57 (DE), 78 to 80 (TNS), lysine 130, and 157 to 160 (YFQN).

This sequence belongs to the NmrA-type oxidoreductase family.

In terms of biological role, may be a redox sensor protein. This is NmrA-like family domain-containing protein DDB_G0286605 from Dictyostelium discoideum (Social amoeba).